The chain runs to 467 residues: 3-isopropylmalate dehydratase large subunit (467 aa).

[4Fe-4S] cluster is bound by residues cysteine 347, cysteine 407, and cysteine 410.

The protein belongs to the aconitase/IPM isomerase family. LeuC type 1 subfamily. Heterodimer of LeuC and LeuD. [4Fe-4S] cluster serves as cofactor.

The catalysed reaction is (2R,3S)-3-isopropylmalate = (2S)-2-isopropylmalate. It functions in the pathway amino-acid biosynthesis; L-leucine biosynthesis; L-leucine from 3-methyl-2-oxobutanoate: step 2/4. Its function is as follows. Catalyzes the isomerization between 2-isopropylmalate and 3-isopropylmalate, via the formation of 2-isopropylmaleate. The chain is 3-isopropylmalate dehydratase large subunit from Crocosphaera subtropica (strain ATCC 51142 / BH68) (Cyanothece sp. (strain ATCC 51142)).